A 172-amino-acid polypeptide reads, in one-letter code: MSRQHAYSREELLATARGELFSHSNARLPNDPMLMFDRITGIYADGGSHGKGIVNAELDIRPDLWFFGCHFLGDPVMPGCLGLDAMWQLTGFFLTWSGATPGYGRALGCGEVKFTGQVLPNAKLVRYEVEMTKIINRTLVIGQANARMLVDNREIYFAKDLRVGMFNNTESF.

Residue His70 is part of the active site.

This sequence belongs to the thioester dehydratase family. FabA subfamily. In terms of assembly, homodimer.

It is found in the cytoplasm. The enzyme catalyses a (3R)-hydroxyacyl-[ACP] = a (2E)-enoyl-[ACP] + H2O. It catalyses the reaction (3R)-hydroxydecanoyl-[ACP] = (2E)-decenoyl-[ACP] + H2O. The catalysed reaction is (2E)-decenoyl-[ACP] = (3Z)-decenoyl-[ACP]. It functions in the pathway lipid metabolism; fatty acid biosynthesis. Its function is as follows. Necessary for the introduction of cis unsaturation into fatty acids. Catalyzes the dehydration of (3R)-3-hydroxydecanoyl-ACP to E-(2)-decenoyl-ACP and then its isomerization to Z-(3)-decenoyl-ACP. Can catalyze the dehydratase reaction for beta-hydroxyacyl-ACPs with saturated chain lengths up to 16:0, being most active on intermediate chain length. The polypeptide is 3-hydroxydecanoyl-[acyl-carrier-protein] dehydratase (Xylella fastidiosa (strain M12)).